A 115-amino-acid polypeptide reads, in one-letter code: Nucleoid-associated protein Rpic_1036 (115 aa).

Belongs to the YbaB/EbfC family. As to quaternary structure, homodimer.

Its subcellular location is the cytoplasm. It is found in the nucleoid. Its function is as follows. Binds to DNA and alters its conformation. May be involved in regulation of gene expression, nucleoid organization and DNA protection. In Ralstonia pickettii (strain 12J), this protein is Nucleoid-associated protein Rpic_1036.